A 478-amino-acid polypeptide reads, in one-letter code: Bifunctional protein HldE (478 aa).

The tract at residues 1 to 318 is ribokinase; that stretch reads MKVTLPDFRQ…ENAIRGRADT (318 aa). 195 to 198 contributes to the ATP binding site; sequence NLSE. Asp-264 is a catalytic residue. The interval 344 to 478 is cytidylyltransferase; it reads MTNGCFDILH…NTIKANASKS (135 aa).

This sequence in the N-terminal section; belongs to the carbohydrate kinase PfkB family. It in the C-terminal section; belongs to the cytidylyltransferase family. As to quaternary structure, homodimer.

It catalyses the reaction D-glycero-beta-D-manno-heptose 7-phosphate + ATP = D-glycero-beta-D-manno-heptose 1,7-bisphosphate + ADP + H(+). The enzyme catalyses D-glycero-beta-D-manno-heptose 1-phosphate + ATP + H(+) = ADP-D-glycero-beta-D-manno-heptose + diphosphate. It participates in nucleotide-sugar biosynthesis; ADP-L-glycero-beta-D-manno-heptose biosynthesis; ADP-L-glycero-beta-D-manno-heptose from D-glycero-beta-D-manno-heptose 7-phosphate: step 1/4. It functions in the pathway nucleotide-sugar biosynthesis; ADP-L-glycero-beta-D-manno-heptose biosynthesis; ADP-L-glycero-beta-D-manno-heptose from D-glycero-beta-D-manno-heptose 7-phosphate: step 3/4. Functionally, catalyzes the phosphorylation of D-glycero-D-manno-heptose 7-phosphate at the C-1 position to selectively form D-glycero-beta-D-manno-heptose-1,7-bisphosphate. Catalyzes the ADP transfer from ATP to D-glycero-beta-D-manno-heptose 1-phosphate, yielding ADP-D-glycero-beta-D-manno-heptose. The polypeptide is Bifunctional protein HldE (Pectobacterium carotovorum subsp. carotovorum (strain PC1)).